The sequence spans 87 residues: UPF0367 protein SynRCC307_0258 (87 aa).

Belongs to the UPF0367 family.

The sequence is that of UPF0367 protein SynRCC307_0258 from Synechococcus sp. (strain RCC307).